The sequence spans 211 residues: uncharacterized protein (211 aa).

This is an uncharacterized protein from Acidianus convivator (ATV).